A 377-amino-acid chain; its full sequence is 3-dehydroquinate synthase (377 aa).

NAD(+) is bound by residues 115–119, 139–140, Lys152, and Lys161; these read GVIGD and TS. Zn(2+) is bound by residues Glu194, His256, and His275.

Belongs to the sugar phosphate cyclases superfamily. Dehydroquinate synthase family. It depends on Co(2+) as a cofactor. Requires Zn(2+) as cofactor. NAD(+) serves as cofactor.

Its subcellular location is the cytoplasm. The enzyme catalyses 7-phospho-2-dehydro-3-deoxy-D-arabino-heptonate = 3-dehydroquinate + phosphate. It participates in metabolic intermediate biosynthesis; chorismate biosynthesis; chorismate from D-erythrose 4-phosphate and phosphoenolpyruvate: step 2/7. In terms of biological role, catalyzes the conversion of 3-deoxy-D-arabino-heptulosonate 7-phosphate (DAHP) to dehydroquinate (DHQ). The chain is 3-dehydroquinate synthase from Rhizobium rhizogenes (strain K84 / ATCC BAA-868) (Agrobacterium radiobacter).